Consider the following 182-residue polypeptide: Meiotic recombination protein REC104 (182 aa).

In terms of assembly, interacts with REC114 and SPO11.

Functionally, potential transcriptional regulator that is required to activate expression of a number of early meiotic genes including HOP1. The sequence is that of Meiotic recombination protein REC104 (REC104) from Saccharomyces cerevisiae (strain ATCC 204508 / S288c) (Baker's yeast).